The sequence spans 294 residues: MLENLSTEHRNEKTMNLDEMNIKEVLQSMNEEDRTVALAVEKEIEHIEKVVRVVIQSFEEEGRLIYIGAGTSGRLGILDAVECPPTFGTDDKMVQGFIAGGLKAFTKAVEGAEDREELAEEDLKSIGLNEKDTVIGIAASGRTPYVIGGLKYANSVGASTASISCNKNAEISKYAKLNVEVETGAEILTGSTRLKAGTAQKLVLNMISTASMIGVGKVYKNLMVDVQSTNEKLVERSKRIIVEATGVSYEVAAEHYEKAERNVKAAIVMVLLQCEYGEALEKLKQAKGFVKKAL.

The SIS domain maps to 54-217 (VIQSFEEEGR…STASMIGVGK (164 aa)). Glu-82 acts as the Proton donor in catalysis. The active site involves Glu-113.

This sequence belongs to the GCKR-like family. MurNAc-6-P etherase subfamily. Homodimer.

The enzyme catalyses N-acetyl-D-muramate 6-phosphate + H2O = N-acetyl-D-glucosamine 6-phosphate + (R)-lactate. Its pathway is amino-sugar metabolism; N-acetylmuramate degradation. Its function is as follows. Specifically catalyzes the cleavage of the D-lactyl ether substituent of MurNAc 6-phosphate, producing GlcNAc 6-phosphate and D-lactate. The sequence is that of N-acetylmuramic acid 6-phosphate etherase from Bacillus anthracis (strain A0248).